The following is a 304-amino-acid chain: Vacuolar protein sorting-associated protein 26C (304 aa).

Belongs to the VPS26 family. As to quaternary structure, component of the commander complex that is essential for endosomal recycling of transmembrane cargos; the commander complex is composed of the CCC subcomplex and the retriever subcomplex. Component of the heterotrimeric retriever complex consisting of vps26c, vps29 and vps35l; within the complex interacts with vps35l. Interacts with snx17 (via C-terminus); the interaction is direct and associates snx17 with the retriever complex. Interacts with snx31; the interaction is direct.

It is found in the endosome. Its function is as follows. Component of the commander complex that is essential for endosomal recycling of transmembrane cargos; the commander complex is composed of the CCC subcomplex and the retriever subcomplex. Component of the retriever complex, which is a heterotrimeric complex related to retromer cargo-selective complex (CSC) and essential for retromer-independent retrieval and recycling of numerous cargos such as integrin alpha-5/beta-1 (ITGA5:ITGB1). The recruitment of the retriever complex to the endosomal membrane involves CCC and WASH complexes. In the endosomes, drives the retriever and recycling of NxxY-motif-containing cargo proteins by coupling to snx17, a cargo essential for the homeostatic maintenance of numerous cell surface proteins associated with processes that include cell migration, cell adhesion, nutrient supply and cell signaling. In Dictyostelium discoideum (Social amoeba), this protein is Vacuolar protein sorting-associated protein 26C (vps26c).